Here is a 353-residue protein sequence, read N- to C-terminus: ATP-dependent kinase YFH7 (353 aa).

31–39 contacts ATP; that stretch reads GSPGSGKST.

Belongs to the YFH7 family.

Its function is as follows. ATP-dependent kinase that could be involved in endoplasmic reticulum membrane assembly. The protein is ATP-dependent kinase YFH7 (YFH7) of Saccharomyces cerevisiae (strain Lalvin EC1118 / Prise de mousse) (Baker's yeast).